Reading from the N-terminus, the 122-residue chain is Holo-[acyl-carrier-protein] synthase (122 aa).

Residues aspartate 9 and glutamate 58 each coordinate Mg(2+).

Belongs to the P-Pant transferase superfamily. AcpS family. It depends on Mg(2+) as a cofactor.

It is found in the cytoplasm. The enzyme catalyses apo-[ACP] + CoA = holo-[ACP] + adenosine 3',5'-bisphosphate + H(+). In terms of biological role, transfers the 4'-phosphopantetheine moiety from coenzyme A to a Ser of acyl-carrier-protein. This is Holo-[acyl-carrier-protein] synthase from Chlamydia felis (strain Fe/C-56) (Chlamydophila felis).